The chain runs to 321 residues: Annexin A5 (321 aa).

4 Annexin repeats span residues 15-86, 87-158, 170-242, and 246-317; these read FDAR…SLMR, PARI…VLLQ, ALVE…AVVK, and SVPA…LLCG.

This sequence belongs to the annexin family.

Collagen-binding protein. The chain is Annexin A5 (ANXA5) from Gallus gallus (Chicken).